The primary structure comprises 672 residues: Hydroxyproline O-galactosyltransferase GALT5 (672 aa).

Residues 1–28 (MKKPKLSKVEKIDKIDLFSSLWKQRSVR) are Cytoplasmic-facing. The chain crosses the membrane as a helical; Signal-anchor for type II membrane protein span at residues 29–49 (VIMAIGFLYLVIVSVEIPLVF). The Lumenal segment spans residues 50–672 (KSWSSSSVPL…QNKPECCNMR (623 aa)). The Galectin domain occupies 191–392 (KLMELPCGLT…DIDVHSVFVA (202 aa)). N-linked (GlcNAc...) asparagine glycosylation is found at asparagine 306 and asparagine 620.

Belongs to the glycosyltransferase 31 family. Mn(2+) is required as a cofactor. As to expression, expressed in juvenile leaves, stems, cauline leaves and siliques.

It localises to the golgi apparatus membrane. It participates in protein modification; protein glycosylation. Possesses hydroxyproline O-galactosyltransferase activity. Transfers galactose from UDP-galactose to hydroxyproline residues in the arabinogalactan proteins (AGPs). Is specific for AGPs containing non-contiguous peptidyl hydroxyproline residues. Utilizes UDP-galactose solely as sugar donor. The addition of galactose onto the peptidyl hydroxyproline residues in AGP core proteins represents the first committed step in arabinogalactan polysaccharide addition. AGP glycans play essential roles in both vegetative and reproductive plant growth. This Arabidopsis thaliana (Mouse-ear cress) protein is Hydroxyproline O-galactosyltransferase GALT5.